Reading from the N-terminus, the 117-residue chain is Iron-sulfur cluster insertion protein ErpA (117 aa).

Iron-sulfur cluster-binding residues include Cys45, Cys109, and Cys111.

Belongs to the HesB/IscA family. Homodimer. Requires iron-sulfur cluster as cofactor.

Required for insertion of 4Fe-4S clusters for at least IspG. The chain is Iron-sulfur cluster insertion protein ErpA from Blochmanniella pennsylvanica (strain BPEN).